Consider the following 100-residue polypeptide: Small ribosomal subunit protein uS14c (100 aa).

This sequence belongs to the universal ribosomal protein uS14 family. Part of the 30S ribosomal subunit.

Its subcellular location is the plastid. It localises to the chloroplast. Its function is as follows. Binds 16S rRNA, required for the assembly of 30S particles. This is Small ribosomal subunit protein uS14c from Illicium oligandrum (Star anise).